The sequence spans 376 residues: Oligopeptide transport system permease protein OppC (376 aa).

Helical transmembrane passes span 46-66, 149-169, 173-193, 209-229, 242-262, 297-317, and 341-361; these read WAILFFLLIVLIILLAIIVPL, YPLLGTNGLGVDIWTLLWASM, LWIAIVVALVSMVFGTIYGAI, IIEIIDLVPSILWIIVLGATF, VIFTLIFVFWTWPAATTRIYI, LAVVFVSLIPAVIGYEASLVF, and IALITSSIVSFAILTVSTRVF. Positions 169–362 constitute an ABC transmembrane type-1 domain; it reads MAKSLWIAIV…ILTVSTRVFA (194 aa).

Belongs to the binding-protein-dependent transport system permease family. OppBC subfamily. The complex is composed of two ATP-binding proteins (OppD and OppF), two transmembrane proteins (OppB and OppC) and a solute-binding protein (OppA).

It is found in the cell membrane. Its function is as follows. Part of the ABC transporter complex OppABCDF involved in the uptake of oligopeptides. Probably responsible for the translocation of the substrate across the membrane. This is Oligopeptide transport system permease protein OppC (oppC) from Mycoplasma pneumoniae (strain ATCC 29342 / M129 / Subtype 1) (Mycoplasmoides pneumoniae).